Here is a 414-residue protein sequence, read N- to C-terminus: Dual-specificity RNA methyltransferase RlmN (414 aa).

Over residues 1 to 13 (MTSAVGISVPNTD) the composition is skewed to polar residues. The tract at residues 1–22 (MTSAVGISVPNTDAQSSQSASQ) is disordered. Catalysis depends on glutamate 124, which acts as the Proton acceptor. Positions 134–377 (TGSRKTLCIS…CTIRQTRGDD (244 aa)) constitute a Radical SAM core domain. Cysteine 141 and cysteine 382 form a disulfide bridge. Residues cysteine 148, cysteine 152, and cysteine 155 each contribute to the [4Fe-4S] cluster site. Residues 204-205 (GE), serine 236, 258-260 (SLH), and asparagine 339 contribute to the S-adenosyl-L-methionine site. Cysteine 382 acts as the S-methylcysteine intermediate in catalysis.

This sequence belongs to the radical SAM superfamily. RlmN family. [4Fe-4S] cluster is required as a cofactor.

It is found in the cytoplasm. The enzyme catalyses adenosine(2503) in 23S rRNA + 2 reduced [2Fe-2S]-[ferredoxin] + 2 S-adenosyl-L-methionine = 2-methyladenosine(2503) in 23S rRNA + 5'-deoxyadenosine + L-methionine + 2 oxidized [2Fe-2S]-[ferredoxin] + S-adenosyl-L-homocysteine. It catalyses the reaction adenosine(37) in tRNA + 2 reduced [2Fe-2S]-[ferredoxin] + 2 S-adenosyl-L-methionine = 2-methyladenosine(37) in tRNA + 5'-deoxyadenosine + L-methionine + 2 oxidized [2Fe-2S]-[ferredoxin] + S-adenosyl-L-homocysteine. Specifically methylates position 2 of adenine 2503 in 23S rRNA and position 2 of adenine 37 in tRNAs. m2A2503 modification seems to play a crucial role in the proofreading step occurring at the peptidyl transferase center and thus would serve to optimize ribosomal fidelity. The sequence is that of Dual-specificity RNA methyltransferase RlmN from Acinetobacter baylyi (strain ATCC 33305 / BD413 / ADP1).